A 212-amino-acid chain; its full sequence is Deoxyribose-phosphate aldolase (212 aa).

Aspartate 89 serves as the catalytic Proton donor/acceptor. Catalysis depends on lysine 151, which acts as the Schiff-base intermediate with acetaldehyde. Lysine 180 serves as the catalytic Proton donor/acceptor.

Belongs to the DeoC/FbaB aldolase family. DeoC type 1 subfamily.

It localises to the cytoplasm. It catalyses the reaction 2-deoxy-D-ribose 5-phosphate = D-glyceraldehyde 3-phosphate + acetaldehyde. It participates in carbohydrate degradation; 2-deoxy-D-ribose 1-phosphate degradation; D-glyceraldehyde 3-phosphate and acetaldehyde from 2-deoxy-alpha-D-ribose 1-phosphate: step 2/2. Functionally, catalyzes a reversible aldol reaction between acetaldehyde and D-glyceraldehyde 3-phosphate to generate 2-deoxy-D-ribose 5-phosphate. This chain is Deoxyribose-phosphate aldolase, found in Clostridium botulinum (strain Langeland / NCTC 10281 / Type F).